We begin with the raw amino-acid sequence, 651 residues long: NADH oxidase (651 aa).

Residue Q104 participates in FMN binding. Y175 serves as the catalytic Proton donor. Residues R223 and 320-321 contribute to the FMN site; that span reads GR. Positions 344, 347, 351, and 364 each coordinate [4Fe-4S] cluster. The FAD site is built by A396, E415, Q423, K433, and A460.

In the N-terminal section; belongs to the NADH:flavin oxidoreductase/NADH oxidase family. As to quaternary structure, homohexamer. FMN is required as a cofactor. Requires FAD as cofactor. The cofactor is [4Fe-4S] cluster. In terms of processing, the N-terminus is blocked.

It catalyses the reaction A + NADH + H(+) = AH2 + NAD(+). Reduces a range of alternative electron acceptors. This is NADH oxidase from Thermoanaerobacter brockii (Thermoanaerobium brockii).